The chain runs to 215 residues: Adenylate kinase (215 aa).

Position 10–15 (10–15 (GAGKGT)) interacts with ATP. The interval 30–59 (STGDMLRAAVKAGTELGLKAKSVMDAGNLV) is NMP. AMP contacts are provided by residues T31, R36, 57–59 (NLV), 85–88 (GFPR), and Q92. The interval 122-159 (GRRVHEGSGRIYHTIFNPPKVEGVDDVTGESLVQRKDD) is LID. Residues R123 and 132 to 133 (IY) contribute to the ATP site. Positions 156 and 167 each coordinate AMP. G201 provides a ligand contact to ATP.

The protein belongs to the adenylate kinase family. Monomer.

The protein localises to the cytoplasm. The enzyme catalyses AMP + ATP = 2 ADP. The protein operates within purine metabolism; AMP biosynthesis via salvage pathway; AMP from ADP: step 1/1. Functionally, catalyzes the reversible transfer of the terminal phosphate group between ATP and AMP. Plays an important role in cellular energy homeostasis and in adenine nucleotide metabolism. This is Adenylate kinase from Pseudomonas syringae pv. tomato (strain ATCC BAA-871 / DC3000).